The sequence spans 572 residues: Urease subunit alpha (572 aa).

One can recognise a Urease domain in the interval 134–572 (GGIDAHVHMI…VSLGQLYFFS (439 aa)). Ni(2+) contacts are provided by His139, His141, and Lys222. Lys222 carries the N6-carboxylysine modification. His224 is a binding site for substrate. His251 and His277 together coordinate Ni(2+). The active-site Proton donor is His325. Asp365 lines the Ni(2+) pocket.

This sequence belongs to the metallo-dependent hydrolases superfamily. Urease alpha subunit family. As to quaternary structure, heterotrimer of UreA (gamma), UreB (beta) and UreC (alpha) subunits. Three heterotrimers associate to form the active enzyme. Ni cation is required as a cofactor. Carboxylation allows a single lysine to coordinate two nickel ions.

The protein localises to the cytoplasm. The enzyme catalyses urea + 2 H2O + H(+) = hydrogencarbonate + 2 NH4(+). The protein operates within nitrogen metabolism; urea degradation; CO(2) and NH(3) from urea (urease route): step 1/1. The protein is Urease subunit alpha of Laribacter hongkongensis (strain HLHK9).